The primary structure comprises 128 residues: Large ribosomal subunit protein eL22 (128 aa).

A Phosphothreonine modification is found at threonine 62. Serine 66 is modified (phosphoserine). Lysine 69 bears the N6-succinyllysine mark.

Belongs to the eukaryotic ribosomal protein eL22 family. In terms of assembly, component of the large ribosomal subunit.

The protein resides in the cytoplasm. Its function is as follows. Component of the large ribosomal subunit. The ribosome is a large ribonucleoprotein complex responsible for the synthesis of proteins in the cell. The protein is Large ribosomal subunit protein eL22 (RPL22) of Oryctolagus cuniculus (Rabbit).